Here is a 156-residue protein sequence, read N- to C-terminus: Endogenous retrovirus group K member 9 Pro protein (156 aa).

A Peptidase A2 domain is found at 21 to 96 (FEGLVDTGAD…IPLNLWGRDL (76 aa)). Residue aspartate 26 is part of the active site. Positions 111–156 (YSPTSQKIMTKRGYIPGKGLGKNEDGIKIPFEAKINQKREGIGYPF) constitute a G-patch domain.

This sequence belongs to the peptidase A2 family. HERV class-II K(HML-2) subfamily. In terms of assembly, active as a homodimer. In terms of processing, autoproteolytically processed at the N-terminus. Expected C-terminal autoprocessing not detected. The sequence shown is that of the processed Pro protein.

It carries out the reaction Processing at the authentic HIV-1 PR recognition site and release of the mature p17 matrix and the p24 capsid protein, as a result of the cleavage of the -SQNY-|-PIVQ- cleavage site.. Its function is as follows. Retroviral proteases have roles in the processing of the primary translation products and the maturation of the viral particle. Endogenous Pro proteins may have kept, lost or modified their original function during evolution. This chain is Endogenous retrovirus group K member 9 Pro protein (ERVK-9), found in Homo sapiens (Human).